Reading from the N-terminus, the 315-residue chain is Methionyl-tRNA formyltransferase (315 aa).

Residue 110-113 (SLLP) participates in (6S)-5,6,7,8-tetrahydrofolate binding.

It belongs to the Fmt family.

It carries out the reaction L-methionyl-tRNA(fMet) + (6R)-10-formyltetrahydrofolate = N-formyl-L-methionyl-tRNA(fMet) + (6S)-5,6,7,8-tetrahydrofolate + H(+). In terms of biological role, attaches a formyl group to the free amino group of methionyl-tRNA(fMet). The formyl group appears to play a dual role in the initiator identity of N-formylmethionyl-tRNA by promoting its recognition by IF2 and preventing the misappropriation of this tRNA by the elongation apparatus. This Lactobacillus delbrueckii subsp. bulgaricus (strain ATCC BAA-365 / Lb-18) protein is Methionyl-tRNA formyltransferase.